The chain runs to 389 residues: Methylthioribose-1-phosphate isomerase (389 aa).

Aspartate 258 acts as the Proton donor in catalysis.

The protein belongs to the eIF-2B alpha/beta/delta subunits family. MtnA subfamily.

The protein resides in the cytoplasm. Its subcellular location is the nucleus. It carries out the reaction 5-(methylsulfanyl)-alpha-D-ribose 1-phosphate = 5-(methylsulfanyl)-D-ribulose 1-phosphate. The protein operates within amino-acid biosynthesis; L-methionine biosynthesis via salvage pathway; L-methionine from S-methyl-5-thio-alpha-D-ribose 1-phosphate: step 1/6. Functionally, catalyzes the interconversion of methylthioribose-1-phosphate (MTR-1-P) into methylthioribulose-1-phosphate (MTRu-1-P). In Chaetomium globosum (strain ATCC 6205 / CBS 148.51 / DSM 1962 / NBRC 6347 / NRRL 1970) (Soil fungus), this protein is Methylthioribose-1-phosphate isomerase.